We begin with the raw amino-acid sequence, 175 residues long: Translation initiation factor IF-3 (175 aa).

Belongs to the IF-3 family. In terms of assembly, monomer.

The protein resides in the cytoplasm. IF-3 binds to the 30S ribosomal subunit and shifts the equilibrium between 70S ribosomes and their 50S and 30S subunits in favor of the free subunits, thus enhancing the availability of 30S subunits on which protein synthesis initiation begins. The sequence is that of Translation initiation factor IF-3 from Blochmanniella floridana.